The sequence spans 565 residues: NAD-dependent malic enzyme (565 aa).

The Proton donor role is filled by Tyr-104. Arg-157 is an NAD(+) binding site. The Proton acceptor role is filled by Lys-175. 3 residues coordinate a divalent metal cation: Glu-246, Asp-247, and Asp-270. Positions 270 and 418 each coordinate NAD(+).

The protein belongs to the malic enzymes family. Homotetramer. Mg(2+) is required as a cofactor. The cofactor is Mn(2+).

It carries out the reaction (S)-malate + NAD(+) = pyruvate + CO2 + NADH. The enzyme catalyses oxaloacetate + H(+) = pyruvate + CO2. The sequence is that of NAD-dependent malic enzyme from Salmonella dublin (strain CT_02021853).